The chain runs to 382 residues: Queuine tRNA-ribosyltransferase (382 aa).

Catalysis depends on Asp-96, which acts as the Proton acceptor. Substrate-binding positions include 96 to 100 (DSGGF), Asp-151, Gln-194, and Gly-221. An RNA binding region spans residues 252–258 (GVGAPDS). The active-site Nucleophile is the Asp-271. An RNA binding; important for wobble base 34 recognition region spans residues 276–280 (TRIAR). Cys-309, Cys-311, Cys-314, and His-340 together coordinate Zn(2+).

This sequence belongs to the queuine tRNA-ribosyltransferase family. As to quaternary structure, homodimer. Within each dimer, one monomer is responsible for RNA recognition and catalysis, while the other monomer binds to the replacement base PreQ1. It depends on Zn(2+) as a cofactor.

The enzyme catalyses 7-aminomethyl-7-carbaguanine + guanosine(34) in tRNA = 7-aminomethyl-7-carbaguanosine(34) in tRNA + guanine. The protein operates within tRNA modification; tRNA-queuosine biosynthesis. In terms of biological role, catalyzes the base-exchange of a guanine (G) residue with the queuine precursor 7-aminomethyl-7-deazaguanine (PreQ1) at position 34 (anticodon wobble position) in tRNAs with GU(N) anticodons (tRNA-Asp, -Asn, -His and -Tyr). Catalysis occurs through a double-displacement mechanism. The nucleophile active site attacks the C1' of nucleotide 34 to detach the guanine base from the RNA, forming a covalent enzyme-RNA intermediate. The proton acceptor active site deprotonates the incoming PreQ1, allowing a nucleophilic attack on the C1' of the ribose to form the product. After dissociation, two additional enzymatic reactions on the tRNA convert PreQ1 to queuine (Q), resulting in the hypermodified nucleoside queuosine (7-(((4,5-cis-dihydroxy-2-cyclopenten-1-yl)amino)methyl)-7-deazaguanosine). The chain is Queuine tRNA-ribosyltransferase from Lactococcus lactis subsp. cremoris (strain SK11).